A 549-amino-acid chain; its full sequence is Siroheme synthase (549 aa).

Residues 1 to 203 (MNTFPLFFKL…GNENEALAQL (203 aa)) form a precorrin-2 dehydrogenase /sirohydrochlorin ferrochelatase region. NAD(+) is bound by residues 22–23 (DV) and 43–44 (PS). Position 128 is a phosphoserine (Ser128). The tract at residues 247–549 (GEVYIVGAGP…DGDLEQLIIG (303 aa)) is uroporphyrinogen-III C-methyltransferase. Pro256 lines the S-adenosyl-L-methionine pocket. The active-site Proton acceptor is Asp279. The Proton donor role is filled by Lys301. S-adenosyl-L-methionine-binding positions include 332 to 334 (GGD), Ile337, 362 to 363 (TA), Met414, and Ala443.

The protein in the N-terminal section; belongs to the precorrin-2 dehydrogenase / sirohydrochlorin ferrochelatase family. This sequence in the C-terminal section; belongs to the precorrin methyltransferase family.

It carries out the reaction uroporphyrinogen III + 2 S-adenosyl-L-methionine = precorrin-2 + 2 S-adenosyl-L-homocysteine + H(+). It catalyses the reaction precorrin-2 + NAD(+) = sirohydrochlorin + NADH + 2 H(+). The enzyme catalyses siroheme + 2 H(+) = sirohydrochlorin + Fe(2+). It participates in cofactor biosynthesis; adenosylcobalamin biosynthesis; precorrin-2 from uroporphyrinogen III: step 1/1. It functions in the pathway cofactor biosynthesis; adenosylcobalamin biosynthesis; sirohydrochlorin from precorrin-2: step 1/1. The protein operates within porphyrin-containing compound metabolism; siroheme biosynthesis; precorrin-2 from uroporphyrinogen III: step 1/1. Its pathway is porphyrin-containing compound metabolism; siroheme biosynthesis; siroheme from sirohydrochlorin: step 1/1. It participates in porphyrin-containing compound metabolism; siroheme biosynthesis; sirohydrochlorin from precorrin-2: step 1/1. In terms of biological role, multifunctional enzyme that catalyzes the SAM-dependent methylations of uroporphyrinogen III at position C-2 and C-7 to form precorrin-2 via precorrin-1. Then it catalyzes the NAD-dependent ring dehydrogenation of precorrin-2 to yield sirohydrochlorin. Finally, it catalyzes the ferrochelation of sirohydrochlorin to yield siroheme. This Psychrobacter arcticus (strain DSM 17307 / VKM B-2377 / 273-4) protein is Siroheme synthase.